The sequence spans 210 residues: 7-cyano-7-deazaguanine synthase 2 (210 aa).

An ATP-binding site is contributed by 10-20; it reads HSGGMDSTTCL. 4 residues coordinate Zn(2+): C180, C193, C196, and C199.

This sequence belongs to the QueC family. Requires Zn(2+) as cofactor.

It catalyses the reaction 7-carboxy-7-deazaguanine + NH4(+) + ATP = 7-cyano-7-deazaguanine + ADP + phosphate + H2O + H(+). It functions in the pathway purine metabolism; 7-cyano-7-deazaguanine biosynthesis. Its function is as follows. Catalyzes the ATP-dependent conversion of 7-carboxy-7-deazaguanine (CDG) to 7-cyano-7-deazaguanine (preQ(0)). The protein is 7-cyano-7-deazaguanine synthase 2 of Rhodopseudomonas palustris (strain HaA2).